A 257-amino-acid polypeptide reads, in one-letter code: E3 ubiquitin-protein ligase RNF170 (257 aa).

The Lumenal portion of the chain corresponds to 1 to 24 (MADNQEERPHFPLDEGSIIEGVSD). Residues 25-45 (QVIVVVLLSFVAVGSLIYLLL) form a helical membrane-spanning segment. The Cytoplasmic segment spans residues 46 to 200 (RNDEQNIHPE…GGLFWMFRIR (155 aa)). The segment at 87 to 130 (CPVCLQQATFPVETNCGHLFCGSCIIAYWRYGTWLGAINCPICR) adopts an RING-type zinc-finger fold. A helical transmembrane segment spans residues 201 to 221 (IVLCLLGALLYLVSPLDIIPE). Position 222 (Ala222) is a topological domain, lumenal. The helical transmembrane segment at 223 to 243 (LFGILGFLDDLFVLFLLLIYI) threads the bilayer. Residues 244 to 257 (SIMYREVVTQRLYR) are Cytoplasmic-facing.

Its subcellular location is the endoplasmic reticulum membrane. The catalysed reaction is S-ubiquitinyl-[E2 ubiquitin-conjugating enzyme]-L-cysteine + [acceptor protein]-L-lysine = [E2 ubiquitin-conjugating enzyme]-L-cysteine + N(6)-ubiquitinyl-[acceptor protein]-L-lysine.. It functions in the pathway protein modification; protein ubiquitination. In terms of biological role, E3 ubiquitin-protein ligase that plays an essential role in stimulus-induced inositol 1,4,5-trisphosphate receptor (ITPR) ubiquitination and degradation via the endoplasmic reticulum-associated degradation (ERAD) pathway. Also involved in ITPR turnover in resting cells. The chain is E3 ubiquitin-protein ligase RNF170 (rnf170) from Xenopus laevis (African clawed frog).